A 391-amino-acid chain; its full sequence is tRNA (cytosine(38)-C(5))-methyltransferase (391 aa).

The SAM-dependent MTase C5-type domain occupies 4–391 (LRVLELYSGI…VSKLLTVLCE (388 aa)). Residues 13–15 (IGG), aspartate 34, 57–58 (IE), and serine 76 contribute to the S-adenosyl-L-methionine site. Cysteine 79 is an active-site residue. Residue serine 376 participates in S-adenosyl-L-methionine binding.

This sequence belongs to the class I-like SAM-binding methyltransferase superfamily. C5-methyltransferase family.

The protein resides in the cytoplasm. It carries out the reaction cytidine(38) in tRNA + S-adenosyl-L-methionine = 5-methylcytidine(38) in tRNA + S-adenosyl-L-homocysteine + H(+). Specifically methylates cytosine 38 in the anticodon loop of tRNA(Asp). Has higher activity on tRNA(Asp) modified with queuosine at position 34. The chain is tRNA (cytosine(38)-C(5))-methyltransferase (Trdmt1) from Rattus norvegicus (Rat).